Reading from the N-terminus, the 739-residue chain is Phosphoribosylformylglycinamidine synthase subunit PurL (739 aa).

His53 is an active-site residue. Residues Tyr56 and Lys95 each contribute to the ATP site. Glu97 is a binding site for Mg(2+). Substrate contacts are provided by residues 98–101 and Arg120; that span reads SHNH. His99 acts as the Proton acceptor in catalysis. Mg(2+) is bound at residue Asp121. Residue Gln244 participates in substrate binding. Asp274 contributes to the Mg(2+) binding site. 318–320 lines the substrate pocket; sequence ESQ. Positions 501 and 538 each coordinate ATP. Asn539 serves as a coordination point for Mg(2+). Ser541 lines the substrate pocket.

The protein belongs to the FGAMS family. As to quaternary structure, monomer. Part of the FGAM synthase complex composed of 1 PurL, 1 PurQ and 2 PurS subunits.

Its subcellular location is the cytoplasm. It catalyses the reaction N(2)-formyl-N(1)-(5-phospho-beta-D-ribosyl)glycinamide + L-glutamine + ATP + H2O = 2-formamido-N(1)-(5-O-phospho-beta-D-ribosyl)acetamidine + L-glutamate + ADP + phosphate + H(+). It participates in purine metabolism; IMP biosynthesis via de novo pathway; 5-amino-1-(5-phospho-D-ribosyl)imidazole from N(2)-formyl-N(1)-(5-phospho-D-ribosyl)glycinamide: step 1/2. Functionally, part of the phosphoribosylformylglycinamidine synthase complex involved in the purines biosynthetic pathway. Catalyzes the ATP-dependent conversion of formylglycinamide ribonucleotide (FGAR) and glutamine to yield formylglycinamidine ribonucleotide (FGAM) and glutamate. The FGAM synthase complex is composed of three subunits. PurQ produces an ammonia molecule by converting glutamine to glutamate. PurL transfers the ammonia molecule to FGAR to form FGAM in an ATP-dependent manner. PurS interacts with PurQ and PurL and is thought to assist in the transfer of the ammonia molecule from PurQ to PurL. This Listeria monocytogenes serotype 4b (strain CLIP80459) protein is Phosphoribosylformylglycinamidine synthase subunit PurL.